We begin with the raw amino-acid sequence, 143 residues long: Potassium voltage-gated channel subfamily E regulatory beta subunit 5 (143 aa).

N-linked (GlcNAc...) asparagine glycans are attached at residues N2 and N25. A helical transmembrane segment spans residues 61–81 (LYILLIMIFYACLAGGLILAY). Topologically, residues 82–143 (TRSRKLVEAK…PALAQGAERV (62 aa)) are cytoplasmic.

Belongs to the potassium channel KCNE family. As to quaternary structure, interacts with KCNQ1; impairs KCNQ1 localization in lipid rafts and only conducts current upon strong and continued depolarization. As to expression, detected in embryonal dorsal root and nerve ganglia, in the somites and in myoepicardial layer of the developing heart wall. Detected at lower levels in the central nervous system (CNS) and in developing limb.

Its subcellular location is the membrane. Functionally, potassium channel ancillary subunit that is essential for generation of some native K(+) currents by virtue of formation of heteromeric ion channel complex with voltage-gated potassium (Kv) channel pore-forming alpha subunits. Functions as an inhibitory beta-subunit of the repolarizing cardiac potassium ion channel KCNQ1. In Mus musculus (Mouse), this protein is Potassium voltage-gated channel subfamily E regulatory beta subunit 5 (Kcne5).